A 345-amino-acid chain; its full sequence is S-adenosylmethionine:tRNA ribosyltransferase-isomerase (345 aa).

Belongs to the QueA family. In terms of assembly, monomer.

It localises to the cytoplasm. The catalysed reaction is 7-aminomethyl-7-carbaguanosine(34) in tRNA + S-adenosyl-L-methionine = epoxyqueuosine(34) in tRNA + adenine + L-methionine + 2 H(+). Its pathway is tRNA modification; tRNA-queuosine biosynthesis. Transfers and isomerizes the ribose moiety from AdoMet to the 7-aminomethyl group of 7-deazaguanine (preQ1-tRNA) to give epoxyqueuosine (oQ-tRNA). The protein is S-adenosylmethionine:tRNA ribosyltransferase-isomerase of Shewanella oneidensis (strain ATCC 700550 / JCM 31522 / CIP 106686 / LMG 19005 / NCIMB 14063 / MR-1).